We begin with the raw amino-acid sequence, 148 residues long: MF7 protein (148 aa).

The protein is MF7 protein of Myxoma virus (strain Lausanne) (MYXV).